Consider the following 152-residue polypeptide: Proteolipid protein 2 (152 aa).

The MARVEL domain maps to 19–137 (FSRTRKGILL…DAYFTFPLRQ (119 aa)). The next 3 membrane-spanning stretches (helical) occupy residues 25–45 (GILLLAEIILCLVILICFSAG), 48–68 (GYSSLSVVEMVLAIVFFVIYM), and 85–105 (FFRTLIAAILYLITSIFVLVE). A glycan (N-linked (GlcNAc...) asparagine) is linked at N108. The helical transmembrane segment at 112 to 132 (IAAGVLGLLATCLFGYDAYFT) threads the bilayer.

It is found in the membrane. In terms of biological role, may play a role in cell differentiation in the intestinal epithelium. In Oryctolagus cuniculus (Rabbit), this protein is Proteolipid protein 2 (PLP2).